Consider the following 63-residue polypeptide: Beta-defensin 5 (63 aa).

The first 22 residues, 1-22, serve as a signal peptide directing secretion; sequence MRIHYLLFSFLLVLLSPLSVFT. Pyrrolidone carboxylic acid is present on glutamine 23. Disulfide bonds link cysteine 31-cysteine 59, cysteine 38-cysteine 52, and cysteine 42-cysteine 60.

The protein belongs to the beta-defensin family.

It localises to the secreted. In terms of biological role, has antibacterial activity. The sequence is that of Beta-defensin 5 (Defb5) from Rattus norvegicus (Rat).